The following is a 273-amino-acid chain: Hydroxyethylthiazole kinase (273 aa).

Residue methionine 49 participates in substrate binding. Lysine 125 and threonine 171 together coordinate ATP. Glycine 198 is a binding site for substrate.

The protein belongs to the Thz kinase family. The cofactor is Mg(2+).

It catalyses the reaction 5-(2-hydroxyethyl)-4-methylthiazole + ATP = 4-methyl-5-(2-phosphooxyethyl)-thiazole + ADP + H(+). It functions in the pathway cofactor biosynthesis; thiamine diphosphate biosynthesis; 4-methyl-5-(2-phosphoethyl)-thiazole from 5-(2-hydroxyethyl)-4-methylthiazole: step 1/1. Its function is as follows. Catalyzes the phosphorylation of the hydroxyl group of 4-methyl-5-beta-hydroxyethylthiazole (THZ). The sequence is that of Hydroxyethylthiazole kinase from Natranaerobius thermophilus (strain ATCC BAA-1301 / DSM 18059 / JW/NM-WN-LF).